The chain runs to 104 residues: Large ribosomal subunit protein bL21 (104 aa).

It belongs to the bacterial ribosomal protein bL21 family. As to quaternary structure, part of the 50S ribosomal subunit. Contacts protein L20.

Its function is as follows. This protein binds to 23S rRNA in the presence of protein L20. This is Large ribosomal subunit protein bL21 from Azobacteroides pseudotrichonymphae genomovar. CFP2.